Here is a 156-residue protein sequence, read N- to C-terminus: Small ribosomal subunit protein uS7 (156 aa).

It belongs to the universal ribosomal protein uS7 family. As to quaternary structure, part of the 30S ribosomal subunit. Contacts proteins S9 and S11.

One of the primary rRNA binding proteins, it binds directly to 16S rRNA where it nucleates assembly of the head domain of the 30S subunit. Is located at the subunit interface close to the decoding center, probably blocks exit of the E-site tRNA. This chain is Small ribosomal subunit protein uS7, found in Acidobacterium capsulatum (strain ATCC 51196 / DSM 11244 / BCRC 80197 / JCM 7670 / NBRC 15755 / NCIMB 13165 / 161).